The sequence spans 101 residues: Small ribosomal subunit protein uS14 (101 aa).

This sequence belongs to the universal ribosomal protein uS14 family. In terms of assembly, part of the 30S ribosomal subunit. Contacts proteins S3 and S10.

Functionally, binds 16S rRNA, required for the assembly of 30S particles and may also be responsible for determining the conformation of the 16S rRNA at the A site. This is Small ribosomal subunit protein uS14 from Pelagibacter ubique (strain HTCC1062).